Here is a 320-residue protein sequence, read N- to C-terminus: Cytochrome f (320 aa).

The N-terminal stretch at 1–36 (MKLNSLINLIQKSIYSCTLLLTILNIICIAPNSSNA) is a signal peptide. Heme is bound by residues F37, C57, C60, and H61. The helical transmembrane segment at 286 to 305 (IKGMIAFFFVSVLAQIFFVL) threads the bilayer.

The protein belongs to the cytochrome f family. As to quaternary structure, the 4 large subunits of the cytochrome b6-f complex are cytochrome b6, subunit IV (17 kDa polypeptide, petD), cytochrome f and the Rieske protein, while the 4 small subunits are PetG, PetL, PetM and PetN. The complex functions as a dimer. It depends on heme as a cofactor.

Its subcellular location is the plastid. It is found in the chloroplast thylakoid membrane. Functionally, component of the cytochrome b6-f complex, which mediates electron transfer between photosystem II (PSII) and photosystem I (PSI), cyclic electron flow around PSI, and state transitions. The sequence is that of Cytochrome f (petA) from Porphyra purpurea (Red seaweed).